A 300-amino-acid chain; its full sequence is Pleckstrin homology domain-containing family A member 3 (300 aa).

The region spanning Met-1 to Ala-93 is the PH domain. Residues Met-1 to Thr-100 are interaction with SACM1L. The interval Asp-97–Ser-300 is interaction with VAPA and VAPB. A disordered region spans residues Pro-197–Ser-300. Phosphoserine occurs at positions 236 and 244. The span at Glu-279–Glu-290 shows a compositional bias: basic and acidic residues.

As to quaternary structure, interacts with GTP-bound ARF1. Interacts with SACM1L and VAPA and/or VAPB to form a ternary complex. As to expression, widely expressed.

The protein resides in the golgi apparatus. It is found in the trans-Golgi network membrane. Plays a role in regulation of vesicular cargo transport from the trans-Golgi network (TGN) to the plasma membrane. Regulates Golgi phosphatidylinositol 4-phosphate (PtdIns(4)P) levels and activates the PtdIns(4)P phosphatase activity of SACM1L when it binds PtdIns(4)P in 'trans' configuration. Binds preferentially to PtdIns(4)P. Negatively regulates APOB secretion from hepatocytes. The polypeptide is Pleckstrin homology domain-containing family A member 3 (PLEKHA3) (Homo sapiens (Human)).